The primary structure comprises 491 residues: Protein nucleotidyltransferase YdiU (491 aa).

ATP contacts are provided by Gly94, Gly96, Arg97, Lys117, Asp129, Gly130, Arg180, and Arg187. Asp256 (proton acceptor) is an active-site residue. The Mg(2+) site is built by Asn257 and Asp266. Asp266 lines the ATP pocket.

This sequence belongs to the SELO family. Mg(2+) serves as cofactor. Requires Mn(2+) as cofactor.

It carries out the reaction L-seryl-[protein] + ATP = 3-O-(5'-adenylyl)-L-seryl-[protein] + diphosphate. The enzyme catalyses L-threonyl-[protein] + ATP = 3-O-(5'-adenylyl)-L-threonyl-[protein] + diphosphate. The catalysed reaction is L-tyrosyl-[protein] + ATP = O-(5'-adenylyl)-L-tyrosyl-[protein] + diphosphate. It catalyses the reaction L-histidyl-[protein] + UTP = N(tele)-(5'-uridylyl)-L-histidyl-[protein] + diphosphate. It carries out the reaction L-seryl-[protein] + UTP = O-(5'-uridylyl)-L-seryl-[protein] + diphosphate. The enzyme catalyses L-tyrosyl-[protein] + UTP = O-(5'-uridylyl)-L-tyrosyl-[protein] + diphosphate. Nucleotidyltransferase involved in the post-translational modification of proteins. It can catalyze the addition of adenosine monophosphate (AMP) or uridine monophosphate (UMP) to a protein, resulting in modifications known as AMPylation and UMPylation. This Bacillus cytotoxicus (strain DSM 22905 / CIP 110041 / 391-98 / NVH 391-98) protein is Protein nucleotidyltransferase YdiU.